We begin with the raw amino-acid sequence, 306 residues long: Methionyl-tRNA formyltransferase (306 aa).

A (6S)-5,6,7,8-tetrahydrofolate-binding site is contributed by Ser108–Pro111.

Belongs to the Fmt family.

The enzyme catalyses L-methionyl-tRNA(fMet) + (6R)-10-formyltetrahydrofolate = N-formyl-L-methionyl-tRNA(fMet) + (6S)-5,6,7,8-tetrahydrofolate + H(+). Functionally, attaches a formyl group to the free amino group of methionyl-tRNA(fMet). The formyl group appears to play a dual role in the initiator identity of N-formylmethionyl-tRNA by promoting its recognition by IF2 and preventing the misappropriation of this tRNA by the elongation apparatus. The sequence is that of Methionyl-tRNA formyltransferase from Paenarthrobacter aurescens (strain TC1).